A 307-amino-acid polypeptide reads, in one-letter code: Mitochondrial brown fat uncoupling protein 1 (307 aa).

At valine 2–histidine 10 the chain is on the mitochondrial intermembrane side. A helical transmembrane segment spans residues proline 11–phenylalanine 32. Solcar repeat units lie at residues proline 11 to tyrosine 102, proline 111 to alanine 201, and aspartate 210 to glutamate 295. Over proline 33–lysine 73 the chain is Mitochondrial matrix. Lysine 56 provides a ligand contact to fatty acid 16:0. The chain crosses the membrane as a helical span at residues leucine 74–tyrosine 96. Residues aspartate 97–arginine 116 lie on the Mitochondrial intermembrane side of the membrane. A helical transmembrane segment spans residues isoleucine 117–proline 133. At threonine 134 to threonine 178 the chain is on the mitochondrial matrix side. The chain crosses the membrane as a helical span at residues proline 179 to tyrosine 195. At aspartate 196–valine 212 the chain is on the mitochondrial intermembrane side. The chain crosses the membrane as a helical span at residues proline 213 to proline 232. Over alanine 233–alanine 266 the chain is Mitochondrial matrix. Cysteine sulfenic acid (-SOH) is present on cysteine 254. The helical transmembrane segment at phenylalanine 267–phenylalanine 289 threads the bilayer. Lysine 269 contacts fatty acid 16:0. Over glutamate 290–threonine 307 the chain is Mitochondrial intermembrane.

The protein belongs to the mitochondrial carrier (TC 2.A.29) family. In terms of assembly, most probably functions as a monomer. Binds one purine nucleotide per monomer. However, has also been suggested to function as a homodimer or a homotetramer. Tightly associates with cardiolipin in the mitochondrion inner membrane; may stabilize and regulate its activity. Post-translationally, may undergo sulfenylation upon cold exposure. May increase the sensitivity of UCP1 thermogenic function to the activation by noradrenaline probably through structural effects. In terms of processing, may undergo ubiquitin-mediated proteasomal degradation. In terms of tissue distribution, brown adipose tissue.

Its subcellular location is the mitochondrion inner membrane. It carries out the reaction H(+)(in) = H(+)(out). With respect to regulation, has no constitutive proton transporter activity and has to be activated by long-chain fatty acids/LCFAs. Inhibited by purine nucleotides. Both purine nucleotides and LCFAs bind the cytosolic side of the transporter and directly compete to activate or inhibit it. Activated by noradrenaline and reactive oxygen species. Despite lacking canonical translational encoding for selenocysteine, a small pool of the protein has been observed to selectively incorporate selenocysteine at 'Cys-254'. Selenocysteine-modified protein is highly sensitive to redox modification and may constitute a pool of protein highly sensitive to activation by elevated levels of reactive oxygen species (ROS). Mitochondrial protein responsible for thermogenic respiration, a specialized capacity of brown adipose tissue and beige fat that participates in non-shivering adaptive thermogenesis to temperature and diet variations and more generally to the regulation of energy balance. Functions as a long-chain fatty acid/LCFA and proton symporter, simultaneously transporting one LCFA and one proton through the inner mitochondrial membrane. However, LCFAs remaining associated with the transporter via their hydrophobic tails, it results in an apparent transport of protons activated by LCFAs. Thereby, dissipates the mitochondrial proton gradient and converts the energy of substrate oxydation into heat instead of ATP. Regulates the production of reactive oxygen species/ROS by mitochondria. This chain is Mitochondrial brown fat uncoupling protein 1, found in Mesocricetus auratus (Golden hamster).